A 673-amino-acid chain; its full sequence is DNA ligase (673 aa).

NAD(+)-binding positions include 33 to 37 (DAEYD), 82 to 83 (SL), and E115. K117 acts as the N6-AMP-lysine intermediate in catalysis. NAD(+)-binding residues include R138, E175, K292, and K316. Residues C410, C413, C428, and C434 each contribute to the Zn(2+) site. The 81-residue stretch at 593-673 (VGDNPFKEKT…TFLAWSKPYL (81 aa)) folds into the BRCT domain.

It belongs to the NAD-dependent DNA ligase family. LigA subfamily. It depends on Mg(2+) as a cofactor. Mn(2+) is required as a cofactor.

The enzyme catalyses NAD(+) + (deoxyribonucleotide)n-3'-hydroxyl + 5'-phospho-(deoxyribonucleotide)m = (deoxyribonucleotide)n+m + AMP + beta-nicotinamide D-nucleotide.. Its function is as follows. DNA ligase that catalyzes the formation of phosphodiester linkages between 5'-phosphoryl and 3'-hydroxyl groups in double-stranded DNA using NAD as a coenzyme and as the energy source for the reaction. It is essential for DNA replication and repair of damaged DNA. This is DNA ligase from Pasteurella multocida (strain Pm70).